The chain runs to 255 residues: Myogenic factor 5 (255 aa).

Residues 83–134 (DRRKAATMRERRRLKKVNQAFETLKRCTTTNPNQRLPKVEILRNAIQYIESL) form the bHLH domain. A compositionally biased stretch (low complexity) spans 221–242 (SLPIPDSITPSPTSSTDSLPRS). Positions 221 to 246 (SLPIPDSITPSPTSSTDSLPRSPDAH) are disordered.

In terms of assembly, efficient DNA binding requires dimerization with another bHLH protein.

The protein localises to the nucleus. Functionally, acts as a transcriptional activator that promotes transcription of muscle-specific target genes and plays a role in muscle differentiation. Induces fibroblasts to differentiate into myoblasts. Probable sequence specific DNA-binding protein. This chain is Myogenic factor 5 (myf5), found in Xenopus laevis (African clawed frog).